Here is a 109-residue protein sequence, read N- to C-terminus: Nucleoid-associated protein VS_0917 (109 aa).

Disordered stretches follow at residues 1 to 22 and 88 to 109; these read MFGK…ERMQ and QKEK…KMPF. Positions 9 to 18 are enriched in low complexity; that stretch reads NMMKQAQQMQ.

Belongs to the YbaB/EbfC family. As to quaternary structure, homodimer.

It localises to the cytoplasm. It is found in the nucleoid. Its function is as follows. Binds to DNA and alters its conformation. May be involved in regulation of gene expression, nucleoid organization and DNA protection. The protein is Nucleoid-associated protein VS_0917 of Vibrio atlanticus (strain LGP32) (Vibrio splendidus (strain Mel32)).